The chain runs to 278 residues: Shikimate dehydrogenase (NADP(+)) (278 aa).

Residues serine 19–serine 21 and threonine 66 each bind shikimate. The active-site Proton acceptor is the lysine 70. Residues asparagine 91 and aspartate 106 each contribute to the shikimate site. Residues glycine 129–alanine 133 and phenylalanine 221 each bind NADP(+). Tyrosine 223 contributes to the shikimate binding site. Glycine 242 serves as a coordination point for NADP(+).

This sequence belongs to the shikimate dehydrogenase family. As to quaternary structure, homodimer.

It carries out the reaction shikimate + NADP(+) = 3-dehydroshikimate + NADPH + H(+). The protein operates within metabolic intermediate biosynthesis; chorismate biosynthesis; chorismate from D-erythrose 4-phosphate and phosphoenolpyruvate: step 4/7. Involved in the biosynthesis of the chorismate, which leads to the biosynthesis of aromatic amino acids. Catalyzes the reversible NADPH linked reduction of 3-dehydroshikimate (DHSA) to yield shikimate (SA). The sequence is that of Shikimate dehydrogenase (NADP(+)) from Anaeromyxobacter dehalogenans (strain 2CP-1 / ATCC BAA-258).